The primary structure comprises 292 residues: UDP-N-acetylenolpyruvoylglucosamine reductase (292 aa).

The FAD-binding PCMH-type domain maps to 27 to 188 (KIGGPVRLFI…LRVGFRIIKG (162 aa)). Arg-166 is a catalytic residue. Ser-217 acts as the Proton donor in catalysis. Glu-288 is an active-site residue.

This sequence belongs to the MurB family. Requires FAD as cofactor.

It localises to the cytoplasm. It carries out the reaction UDP-N-acetyl-alpha-D-muramate + NADP(+) = UDP-N-acetyl-3-O-(1-carboxyvinyl)-alpha-D-glucosamine + NADPH + H(+). Its pathway is cell wall biogenesis; peptidoglycan biosynthesis. Functionally, cell wall formation. In Thermosipho melanesiensis (strain DSM 12029 / CIP 104789 / BI429), this protein is UDP-N-acetylenolpyruvoylglucosamine reductase.